The chain runs to 2009 residues: Sodium channel protein type 1 subunit alpha (2009 aa).

The Cytoplasmic segment spans residues 1-128 (MEQTVLVPPG…KIAIKILVHS (128 aa)). A compositionally biased stretch (basic and acidic residues) spans 28–48 (RIAEEKAKNPKPDKKDDDENG). A disordered region spans residues 28–60 (RIAEEKAKNPKPDKKDDDENGPKPNSDLEAGKN). The stretch at 110–454 (ILTPFNPLRK…QQMIEQLKKQ (345 aa)) is one I repeat. A helical transmembrane segment spans residues 129-146 (LFSMLIMCTILTNCVFMT). Topologically, residues 147 to 152 (MSNPPD) are extracellular. The chain crosses the membrane as a helical span at residues 153-177 (WTKNVEYTFTGIYTFESLIKIIARG). Residues 178–188 (FCLEDFTFLRD) lie on the Cytoplasmic side of the membrane. A helical transmembrane segment spans residues 189 to 205 (PWNWLDFTVITFAYVTE). At 206–213 (FVDLGNVS) the chain is on the extracellular side. Asn-211 carries an N-linked (GlcNAc...) asparagine glycan. The chain crosses the membrane as a helical span at residues 214-235 (ALRTFRVLRALKTISVIPGLKT). Residues 236–245 (IVGALIQSVK) lie on the Cytoplasmic side of the membrane. The chain crosses the membrane as a helical span at residues 246-269 (KLSDVMILTVFCLSVFALIGLQLF). At 270-369 (MGNLRNKCIQ…YGYTSFDTFS (100 aa)) the chain is on the extracellular side. Disulfide bonds link Cys-277–Cys-345 and Cys-336–Cys-351. Asn-284, Asn-295, Asn-301, Asn-306, and Asn-338 each carry an N-linked (GlcNAc...) asparagine glycan. Residues 370 to 384 (WAFLSLFRLMTQDFW) constitute an intramembrane region (pore-forming). Topologically, residues 385–397 (ENLYQLTLRAAGK) are extracellular. Residues 398 to 423 (TYMIFFVLVIFLGSFYLINLILAVVA) form a helical membrane-spanning segment. The Cytoplasmic segment spans residues 424 to 768 (MAYEEQNQAT…HVVNLVVMDP (345 aa)). Positions 455–529 (QEAAQQAATA…FQKSESEDSI (75 aa)) are disordered. The segment covering 456–466 (EAAQQAATATA) has biased composition (low complexity). Ser-470 bears the Phosphoserine mark. Residues 479–492 (LSDSSSEASKLSSK) are compositionally biased toward low complexity. Residues 495–506 (KERRNRRKKRKQ) show a composition bias toward basic residues. The segment covering 520–529 (FQKSESEDSI) has biased composition (basic and acidic residues). Residues Ser-523, Ser-525, Ser-550, Ser-551, Ser-607, and Ser-730 each carry the phosphoserine modification. A disordered region spans residues 584–627 (VGSENDFADDEHSTFEDNESRRDSLFVPRRHGERRNSNLSQTSR). A compositionally biased stretch (basic and acidic residues) spans 593–607 (DEHSTFEDNESRRDS). Residues 750 to 1022 (CSPYWLKVKH…QIAVDRMHKG (273 aa)) form an II repeat. A helical membrane pass occupies residues 769 to 787 (FVDLAITICIVLNTLFMAM). Residues 788–797 (EHYPMTDHFN) are Extracellular-facing. A helical transmembrane segment spans residues 798–820 (NVLTVGNLVFTGIFTAEMFLKII). Over 821-830 (AMDPYYYFQE) the chain is Cytoplasmic. A helical membrane pass occupies residues 831-849 (GWNIFDGFIVTLSLVELGL). The Extracellular portion of the chain corresponds to 850-854 (ANVEG). The chain crosses the membrane as a helical span at residues 855–874 (LSVLRSFRLLRVFKLAKSWP). Residues 875–891 (TLNMLIKIIGNSVGALG) lie on the Cytoplasmic side of the membrane. The chain crosses the membrane as a helical span at residues 892–912 (NLTLVLAIIVFIFAVVGMQLF). Over 913 to 938 (GKSYKDCVCKIASDCQLPRWHMNDFF) the chain is Extracellular. A disulfide bridge links Cys-921 with Cys-927. Residues 939–952 (HSFLIVFRVLCGEW) constitute an intramembrane region (pore-forming). Over 953–965 (IETMWDCMEVAGQ) the chain is Extracellular. A disulfide bridge connects residues Cys-959 and Cys-968. Residues 966-992 (AMCLTVFMMVMVIGNLVVLNLFLALLL) form a helical membrane-spanning segment. The Cytoplasmic segment spans residues 993–1218 (SSFSADNLAA…RTCFRIVEHN (226 aa)). A disordered region spans residues 1129 to 1163 (TEDFSSESDLEESKEKLNESSSSSEGSTVDIGAPV). The stretch at 1200–1514 (RGKQWWNLRR…KKYYNAMKKL (315 aa)) is one III repeat. Residues 1219–1237 (WFETFIVFMILLSSGALAF) traverse the membrane as a helical segment. Over 1238–1250 (EDIYIDQRKTIKT) the chain is Extracellular. Residues 1251–1276 (MLEYADKVFTYIFILEMLLKWVAYGY) form a helical membrane-spanning segment. Topologically, residues 1277–1278 (QT) are cytoplasmic. The helical transmembrane segment at 1279–1304 (YFTNAWCWLDFLIVDVSLVSLTANAL) threads the bilayer. The Extracellular segment spans residues 1305–1313 (GYSELGAIK). Residues 1314 to 1332 (SLRTLRALRPLRALSRFEG) traverse the membrane as a helical segment. Residues 1333-1345 (MRVVVNALLGAIP) lie on the Cytoplasmic side of the membrane. Residues 1346-1369 (SIMNVLLVCLIFWLIFSIMGVNLF) form a helical membrane-spanning segment. At 1370–1415 (AGKFYHCINTTTGDRFDIEDVNNHTDCLKLIERNETARWKNVKVNF) the chain is on the extracellular side. An intrachain disulfide couples Cys-1376 to Cys-1396. N-linked (GlcNAc...) asparagine glycosylation is found at Asn-1378, Asn-1392, and Asn-1403. The segment at residues 1416 to 1433 (DNVGFGYLSLLQVATFKG) is an intramembrane region (pore-forming). Residues 1434–1457 (WMDIMYAAVDSRNVELQPKYEESL) lie on the Extracellular side of the membrane. A helical membrane pass occupies residues 1458–1483 (YMYLYFVIFIIFGSFFTLNLFIGVII). Residues 1484 to 1541 (DNFNQQKKKFGGQDIFMTEEQKKYYNAMKKLGSKKPQKPIPRPGNKFQGMVFDFVTRQ) lie on the Cytoplasmic side of the membrane. Ser-1516 bears the Phosphoserine; by PKC mark. An IV repeat occupies 1523–1821 (IPRPGNKFQG…WEKFDPDATQ (299 aa)). Residues 1542-1560 (VFDISIMILICLNMVTMMV) traverse the membrane as a helical segment. Residues 1561 to 1571 (ETDDQSEYVTT) are Extracellular-facing. The S1-S2 loop of repeat IV stretch occupies residues 1561–1571 (ETDDQSEYVTT). The helical transmembrane segment at 1572-1593 (ILSRINLVFIVLFTGECVLKLI) threads the bilayer. The Cytoplasmic segment spans residues 1594 to 1601 (SLRHYYFT). A helical transmembrane segment spans residues 1602-1623 (IGWNIFDFVVVILSIVGMFLAE). The segment at 1619–1636 (MFLAELIEKYFVSPTLFR) is S3b-S4 loop of repeat IV. Residues 1624–1636 (LIEKYFVSPTLFR) lie on the Extracellular side of the membrane. The chain crosses the membrane as a helical span at residues 1637-1655 (VIRLARIGRILRLIKGAKG). At 1656-1665 (IRTLLFALMM) the chain is on the cytoplasmic side. A helical membrane pass occupies residues 1666 to 1688 (SLPALFNIGLLLFLVMFIYAIFG). Residues 1689–1711 (MSNFAYVKREVGIDDMFNFETFG) are Extracellular-facing. Positions 1712 to 1726 (NSMICLFQITTSAGW) form an intramembrane region, pore-forming. Residues 1727–1759 (DGLLAPILNSKPPDCDPNKVNPGSSVKGDCGNP) lie on the Extracellular side of the membrane. Cys-1741 and Cys-1756 form a disulfide bridge. Residues 1760-1788 (SVGIFFFVSYIIISFLVVVNMYIAVILEN) traverse the membrane as a helical segment. Topologically, residues 1789–2009 (FSVATEESAE…EGKDEKAKGK (221 aa)) are cytoplasmic. Residues 1915–1944 (EEVSAVIIQRAYRRHLLKRTVKQASFTYNK) enclose the IQ domain. The tract at residues 1986-2009 (YDRVTKPIVEKHEQEGKDEKAKGK) is disordered. Over residues 1988–2009 (RVTKPIVEKHEQEGKDEKAKGK) the composition is skewed to basic and acidic residues.

Belongs to the sodium channel (TC 1.A.1.10) family. Nav1.1/SCN1A subfamily. As to quaternary structure, the Nav1.1 voltage-gated sodium channel consists of an ion-conducting alpha subunit SCN1A which is functional on its own regulated by one or more beta-1 (SCN1B), beta-2 (SCN2B), beta-3 (SCN3B) and beta-4 (SCN4B) subunits. SCN1B and SCN3B are non-covalently associated with SCN1A. SCN2B and SCN4B are disulfide-linked to SCN1A. SCN1B regulates both the expression at the plasma membrane and the voltage dependence of Nav1.1 inactivation. SCN3B and SCN4B reduce Nav1.1 conductance. Probably interacts with TMEM233; modulates the gating properties of NaV1.1. Interacts with FGF13; regulates the steady-state inactivation of Nav.1.1. Post-translationally, phosphorylation at Ser-1516 by PKC in a highly conserved cytoplasmic loop slows inactivation of the sodium channel and reduces peak sodium currents.

It is found in the cell membrane. The enzyme catalyses Na(+)(in) = Na(+)(out). Its activity is regulated as follows. Activated by the spider toxins Hm1a and Hm1b (H.maculata, AC P60992 and AC P0DOC5) eliciting acute pain and mechanical allodynia. Inhibited by the conotoxin GVIIJ. Inhibited by the spider beta/delta-theraphotoxin-Pre1a. Its function is as follows. Pore-forming subunit of Nav1.1, a voltage-gated sodium (Nav) channel that directly mediates the depolarizing phase of action potentials in excitable membranes. Navs, also called VGSCs (voltage-gated sodium channels) or VDSCs (voltage-dependent sodium channels), operate by switching between closed and open conformations depending on the voltage difference across the membrane. In the open conformation they allow Na(+) ions to selectively pass through the pore, along their electrochemical gradient. The influx of Na(+) ions provokes membrane depolarization, initiating the propagation of electrical signals throughout cells and tissues. By regulating the excitability of neurons, ensures that they respond appropriately to synaptic inputs, maintaining the balance between excitation and inhibition in brain neural circuits. Nav1.1 plays a role in controlling the excitability and action potential propagation from somatosensory neurons, thereby contributing to the sensory perception of mechanically-induced pain. This chain is Sodium channel protein type 1 subunit alpha, found in Homo sapiens (Human).